The sequence spans 317 residues: MTETPLLSVRGLAKHYQTRSATLKILDNVSFDIARGEVVGLVGESGSGKTTIGRSVLRLIEPTAGQIMFDGADVATLSAREMRRQRRRMQYIFQDPFASLSPRMTIGEILMEGLNIQGIGTKAERLERARKALEQVELPPDTINRYAHEFSGGQRQRIGIARALTLEPDFIVADEPVSALDVSIQAQVVNLLRDLQQRLGLTMLFISHDLAVVEYICDRVIVLYLGRIMEIASSEDLYARPQHPYTRALLSAIPSPDPDARTERQILRGDIPSPANPPSGCVFRTRCPMAIDACATTVPQLREVRPGHFKACIRDNI.

The ABC transporter domain maps to 7–250 (LSVRGLAKHY…PQHPYTRALL (244 aa)). 43-50 (GESGSGKT) is a binding site for ATP.

This sequence belongs to the ABC transporter superfamily. As to quaternary structure, the complex is composed of two ATP-binding proteins (BruAb2_0796 and BruAb2_0797), two transmembrane proteins (BruAb2_0794) and a solute-binding protein (BruAb2_0792).

It localises to the cell inner membrane. Its function is as follows. Probably part of an ABC transporter complex that could be involved in peptide import. Probably responsible for energy coupling to the transport system. This is Putative peptide import ATP-binding protein BruAb2_0797 from Brucella abortus biovar 1 (strain 9-941).